The primary structure comprises 592 residues: Guanylate-binding protein 1 (592 aa).

The tract at residues 1–311 is GTPase domain (Globular); sequence MASEIHMTGP…NAISSGDLPC (311 aa). The GB1/RHD3-type G domain maps to 35-278; sequence TQPMVVVAIV…FCSYIFSNSK (244 aa). Residues 45 to 52, 67 to 69, and 97 to 101 each bind GTP; these read GLYRTGKS, LGS, and DTEGL. Serine 156 carries the post-translational modification Phosphoserine; by PIM1. (Microbial infection) Glycyl lysine isopeptide (Lys-Gly) (interchain with G-Cter in ubiquitin) cross-links involve residues lysine 207, lysine 209, lysine 210, lysine 382, lysine 562, lysine 567, lysine 573, and lysine 587. Residue cysteine 589 is modified to Cysteine methyl ester. Cysteine 589 carries S-farnesyl cysteine lipidation. At threonine 590 the chain carries Phosphothreonine; by PIM1. The propeptide at 590 to 592 is removed in mature form; the sequence is TIS.

It belongs to the TRAFAC class dynamin-like GTPase superfamily. GB1/RHD3 GTPase family. GB1 subfamily. As to quaternary structure, homodimer; homodimerization occurs upon GTP-binding and is required for the second hydrolysis step from GDP to GMP. Undergoes conformational changes and oligomerization upon GTP-binding and hydrolysis. Heterodimer with other family members, including GBP2, GBP3, GBP4 and GBP5. Dimerization regulates subcellular location to membranous structures. Interacts with SQSTM1. Interacts (when phosphorylated) with 14-3-3 protein sigma (SFN); leading to GBP1 retention in the cytosol and inactivation. In terms of processing, isoprenylation is required for proper subcellular location. Phosphorylated at Ser-156 by PIM1 in absence of infection, inhibits GBP1: phosphorylation promotes interaction with 14-3-3 protein sigma (SFN), leading to GBP1 retention in the cytosol. Dephosphorylated in response to infection, liberating GBP1. Post-translationally, (Microbial infection) Ubiquitinated by S.flexneri IpaH9.8, leading to its degradation by the proteasome, thereby preventing its ability to promote host defense against bacterial infection.

It is found in the cytoplasmic vesicle membrane. The protein resides in the golgi apparatus membrane. The protein localises to the cell membrane. It localises to the cytoplasm. Its subcellular location is the cytosol. It is found in the secreted. It catalyses the reaction GTP + H2O = GDP + phosphate + H(+). The enzyme catalyses GDP + H2O = GMP + phosphate + H(+). Functionally, interferon (IFN)-inducible GTPase that plays important roles in innate immunity against a diverse range of bacterial, viral and protozoan pathogens. Hydrolyzes GTP to GMP in two consecutive cleavage reactions: GTP is first hydrolyzed to GDP and then to GMP in a processive manner. Following infection, recruited to the pathogen-containing vacuoles or vacuole-escaped bacteria and promotes both inflammasome assembly and autophagy. Acts as a positive regulator of inflammasome assembly by facilitating the detection of inflammasome ligands from pathogens. Involved in the lysis of pathogen-containing vacuoles, releasing pathogens into the cytosol. Following pathogen release in the cytosol, forms a protein coat in a GTPase-dependent manner that encapsulates pathogens and promotes the detection of ligands by pattern recognition receptors. Plays a key role in inflammasome assembly in response to infection by Gram-negative bacteria: following pathogen release in the cytosol, forms a protein coat that encapsulates Gram-negative bacteria and directly binds to lipopolysaccharide (LPS), disrupting the O-antigen barrier and unmasking lipid A that is that detected by the non-canonical inflammasome effector CASP4/CASP11. Also promotes recruitment of proteins that mediate bacterial cytolysis, leading to release double-stranded DNA (dsDNA) that activates the AIM2 inflammasome. Involved in autophagy by regulating bacteriolytic peptide generation via its interaction with ubiquitin-binding protein SQSTM1, which delivers monoubiquitinated proteins to autolysosomes for the generation of bacteriolytic peptides. Confers protection to several pathogens, including the bacterial pathogens L.monocytogenes and M.bovis BCG as well as the protozoan pathogen T.gondii. Exhibits antiviral activity against influenza virus. This Homo sapiens (Human) protein is Guanylate-binding protein 1.